We begin with the raw amino-acid sequence, 266 residues long: Putative carbamate hydrolase RutD (266 aa).

Belongs to the AB hydrolase superfamily. Hydrolase RutD family.

The enzyme catalyses carbamate + 2 H(+) = NH4(+) + CO2. In terms of biological role, involved in pyrimidine catabolism. May facilitate the hydrolysis of carbamate, a reaction that can also occur spontaneously. This is Putative carbamate hydrolase RutD from Escherichia coli O157:H7.